Reading from the N-terminus, the 424-residue chain is Serine--tRNA ligase (424 aa).

Over residues 1–15 (MIDPKLLRTDPDAVR) the composition is skewed to basic and acidic residues. The segment at 1–27 (MIDPKLLRTDPDAVRRSQAARGEDSSV) is disordered. Position 230 to 232 (230 to 232 (TSE)) interacts with L-serine. Residues 261 to 263 (RRE) and Val-277 contribute to the ATP site. An L-serine-binding site is contributed by Glu-284. 348 to 351 (EITS) contributes to the ATP binding site. Position 382 (Thr-382) interacts with L-serine.

It belongs to the class-II aminoacyl-tRNA synthetase family. Type-1 seryl-tRNA synthetase subfamily. Homodimer. The tRNA molecule binds across the dimer.

Its subcellular location is the cytoplasm. The catalysed reaction is tRNA(Ser) + L-serine + ATP = L-seryl-tRNA(Ser) + AMP + diphosphate + H(+). It carries out the reaction tRNA(Sec) + L-serine + ATP = L-seryl-tRNA(Sec) + AMP + diphosphate + H(+). It participates in aminoacyl-tRNA biosynthesis; selenocysteinyl-tRNA(Sec) biosynthesis; L-seryl-tRNA(Sec) from L-serine and tRNA(Sec): step 1/1. Its function is as follows. Catalyzes the attachment of serine to tRNA(Ser). Is also able to aminoacylate tRNA(Sec) with serine, to form the misacylated tRNA L-seryl-tRNA(Sec), which will be further converted into selenocysteinyl-tRNA(Sec). This chain is Serine--tRNA ligase, found in Cutibacterium acnes (strain DSM 16379 / KPA171202) (Propionibacterium acnes).